A 416-amino-acid chain; its full sequence is Diaminopimelate decarboxylase (416 aa).

K60 bears the N6-(pyridoxal phosphate)lysine mark. Pyridoxal 5'-phosphate-binding positions include G240 and 274 to 277 (EPGR). Substrate is bound by residues R277, R313, and Y317. The active-site Proton donor is the C343. Substrate contacts are provided by E344 and Y371. Position 371 (Y371) interacts with pyridoxal 5'-phosphate.

It belongs to the Orn/Lys/Arg decarboxylase class-II family. LysA subfamily. Homodimer. The cofactor is pyridoxal 5'-phosphate.

The enzyme catalyses meso-2,6-diaminopimelate + H(+) = L-lysine + CO2. It functions in the pathway amino-acid biosynthesis; L-lysine biosynthesis via DAP pathway; L-lysine from DL-2,6-diaminopimelate: step 1/1. Specifically catalyzes the decarboxylation of meso-diaminopimelate (meso-DAP) to L-lysine. In Pseudomonas fluorescens, this protein is Diaminopimelate decarboxylase.